Here is a 186-residue protein sequence, read N- to C-terminus: uncharacterized protein (186 aa).

A signal peptide spans 1–18 (MKKFFFAAALVVSGLLVG). Residue Cys-19 is the site of N-palmitoyl cysteine attachment. A lipid anchor (S-diacylglycerol cysteine) is attached at Cys-19.

Its subcellular location is the cell membrane. This is an uncharacterized protein from Salmonella typhimurium (strain LT2 / SGSC1412 / ATCC 700720).